Consider the following 118-residue polypeptide: Large ribosomal subunit protein bL20 (118 aa).

The protein belongs to the bacterial ribosomal protein bL20 family.

Functionally, binds directly to 23S ribosomal RNA and is necessary for the in vitro assembly process of the 50S ribosomal subunit. It is not involved in the protein synthesizing functions of that subunit. This Pseudomonas syringae pv. syringae (strain B728a) protein is Large ribosomal subunit protein bL20.